The chain runs to 445 residues: Tubulin beta-1 chain (445 aa).

Residues 1–4 (MREI) carry the MREI motif motif. GTP contacts are provided by Gln11, Glu69, Ser138, Gly142, Thr143, Gly144, Asn204, and Asn226. Glu69 provides a ligand contact to Mg(2+). Residues 424–445 (QYQDATADEQGEFEEEGEEDEA) form a disordered region. The segment covering 429-445 (TADEQGEFEEEGEEDEA) has biased composition (acidic residues). The residue at position 438 (Glu438) is a 5-glutamyl polyglutamate.

Belongs to the tubulin family. In terms of assembly, dimer of alpha and beta chains. A typical microtubule is a hollow water-filled tube with an outer diameter of 25 nm and an inner diameter of 15 nM. Alpha-beta heterodimers associate head-to-tail to form protofilaments running lengthwise along the microtubule wall with the beta-tubulin subunit facing the microtubule plus end conferring a structural polarity. Microtubules usually have 13 protofilaments but different protofilament numbers can be found in some organisms and specialized cells. Mg(2+) is required as a cofactor. In terms of processing, some glutamate residues at the C-terminus are polyglycylated, resulting in polyglycine chains on the gamma-carboxyl group. Glycylation is mainly limited to tubulin incorporated into axonemes (cilia and flagella) whereas glutamylation is prevalent in neuronal cells, centrioles, axonemes, and the mitotic spindle. Both modifications can coexist on the same protein on adjacent residues, and lowering polyglycylation levels increases polyglutamylation, and reciprocally. The precise function of polyglycylation is still unclear. Some glutamate residues at the C-terminus are polyglutamylated, resulting in polyglutamate chains on the gamma-carboxyl group. Polyglutamylation plays a key role in microtubule severing by spastin (SPAST). SPAST preferentially recognizes and acts on microtubules decorated with short polyglutamate tails: severing activity by SPAST increases as the number of glutamates per tubulin rises from one to eight, but decreases beyond this glutamylation threshold. Highly expressed in skeletal muscle.

The protein localises to the cytoplasm. The protein resides in the cytoskeleton. In terms of biological role, tubulin is the major constituent of microtubules, a cylinder consisting of laterally associated linear protofilaments composed of alpha- and beta-tubulin heterodimers. Microtubules grow by the addition of GTP-tubulin dimers to the microtubule end, where a stabilizing cap forms. Below the cap, tubulin dimers are in GDP-bound state, owing to GTPase activity of alpha-tubulin. This Gallus gallus (Chicken) protein is Tubulin beta-1 chain.